The following is a 972-amino-acid chain: Translation initiation factor IF-2 (972 aa).

The segment covering 48 to 63 (DHLRKSHGATDGDKRK) has biased composition (basic and acidic residues). Disordered regions lie at residues 48–85 (DHLR…KART) and 99–385 (RDDV…QAPT). Positions 105–114 (GAEQGQAQVA) are enriched in low complexity. The segment covering 121 to 181 (ELKRREEEAR…EEEAAAKRVA (61 aa)) has biased composition (basic and acidic residues). Positions 182–205 (AEAAAAQQQAAAQQAAAAEQQEAA) are enriched in low complexity. Over residues 212–263 (DEARAAAERAAQREAAKKAEDAAREAADKARAEQEEISKRRAAAEAEARAIR) the composition is skewed to basic and acidic residues. Residues 279–288 (PPKPVEPPKP) show a composition bias toward pro residues. A compositionally biased stretch (low complexity) spans 313–328 (PAGAAAPATTAPAGAG). The span at 357–370 (SSGGVDRGWRGGPK) shows a compositional bias: gly residues. The region spanning 472–641 (PRPPVVTVMG…LLQAEVLELK (170 aa)) is the tr-type G domain. The tract at residues 481-488 (GHVDHGKT) is G1. 481 to 488 (GHVDHGKT) is a binding site for GTP. The tract at residues 506-510 (GITQH) is G2. Residues 527-530 (DTPG) are G3. GTP contacts are provided by residues 527–531 (DTPGH) and 581–584 (NKID). The segment at 581–584 (NKID) is G4. A G5 region spans residues 617–619 (SAK).

The protein belongs to the TRAFAC class translation factor GTPase superfamily. Classic translation factor GTPase family. IF-2 subfamily.

It is found in the cytoplasm. In terms of biological role, one of the essential components for the initiation of protein synthesis. Protects formylmethionyl-tRNA from spontaneous hydrolysis and promotes its binding to the 30S ribosomal subunits. Also involved in the hydrolysis of GTP during the formation of the 70S ribosomal complex. This chain is Translation initiation factor IF-2, found in Burkholderia lata (strain ATCC 17760 / DSM 23089 / LMG 22485 / NCIMB 9086 / R18194 / 383).